A 236-amino-acid chain; its full sequence is ATP-dependent dethiobiotin synthetase BioD (236 aa).

Thr19 lines the Mg(2+) pocket. Lys40 is a catalytic residue. Residues Asp61 and Glu122 each contribute to the Mg(2+) site. Residues Asp61, 122-125 (EGVG), 182-183 (NT), and 211-213 (PRL) contribute to the ATP site.

Belongs to the dethiobiotin synthetase family. As to quaternary structure, homodimer. Mg(2+) serves as cofactor.

The protein resides in the cytoplasm. It carries out the reaction (7R,8S)-7,8-diammoniononanoate + CO2 + ATP = (4R,5S)-dethiobiotin + ADP + phosphate + 3 H(+). It functions in the pathway cofactor biosynthesis; biotin biosynthesis; biotin from 7,8-diaminononanoate: step 1/2. Catalyzes a mechanistically unusual reaction, the ATP-dependent insertion of CO2 between the N7 and N8 nitrogen atoms of 7,8-diaminopelargonic acid (DAPA, also called 7,8-diammoniononanoate) to form a ureido ring. This Janthinobacterium sp. (strain Marseille) (Minibacterium massiliensis) protein is ATP-dependent dethiobiotin synthetase BioD.